A 56-amino-acid polypeptide reads, in one-letter code: Repressor-like protein SSo7c4 (56 aa).

In terms of domain architecture, SpoVT-AbrB spans 4–51; the sequence is EEIVKVSRNYQVTIPAKVRQKFQIKEGDLVKVTFDESGGVVKIQLLDS.

This Saccharolobus solfataricus (strain ATCC 35092 / DSM 1617 / JCM 11322 / P2) (Sulfolobus solfataricus) protein is Repressor-like protein SSo7c4.